Reading from the N-terminus, the 282-residue chain is Bifunctional protein FolD (282 aa).

NADP(+)-binding positions include 165-167, serine 190, and threonine 231; that span reads GRS.

The protein belongs to the tetrahydrofolate dehydrogenase/cyclohydrolase family. As to quaternary structure, homodimer.

It catalyses the reaction (6R)-5,10-methylene-5,6,7,8-tetrahydrofolate + NADP(+) = (6R)-5,10-methenyltetrahydrofolate + NADPH. It carries out the reaction (6R)-5,10-methenyltetrahydrofolate + H2O = (6R)-10-formyltetrahydrofolate + H(+). Its pathway is one-carbon metabolism; tetrahydrofolate interconversion. Its function is as follows. Catalyzes the oxidation of 5,10-methylenetetrahydrofolate to 5,10-methenyltetrahydrofolate and then the hydrolysis of 5,10-methenyltetrahydrofolate to 10-formyltetrahydrofolate. The polypeptide is Bifunctional protein FolD (Clostridium botulinum (strain Eklund 17B / Type B)).